The primary structure comprises 108 residues: Curli assembly protein CsgC (108 aa).

An N-terminal signal peptide occupies residues 1-8 (MHTLLLLA).

It belongs to the CsgC/AgfC family.

Its subcellular location is the periplasm. Its function is as follows. Plays a role in the extracellular assembly of CsgA into thin aggregative fimbriae (Tafi) fibers. Assembly may also require CsgE. Tafi are thought to be assembled via an extracellular nucleation-precipitation (ENP) pathway, and possibly also via an intracellular non-CsgC-dependent pathway. In Salmonella arizonae (strain ATCC BAA-731 / CDC346-86 / RSK2980), this protein is Curli assembly protein CsgC.